The primary structure comprises 208 residues: Small ribosomal subunit protein uS2 (208 aa).

It belongs to the universal ribosomal protein uS2 family.

This Cenarchaeum symbiosum (strain A) protein is Small ribosomal subunit protein uS2.